A 540-amino-acid chain; its full sequence is Mitochondrial antiviral-signaling protein (540 aa).

Position 2 is an N-acetylproline (Pro2). The Cytoplasmic segment spans residues 2 to 513 (PFAEDKTYKY…REVPCHRPSP (512 aa)). Glycyl lysine isopeptide (Lys-Gly) (interchain with G-Cter in ubiquitin) cross-links involve residues Lys7 and Lys10. A CARD domain is found at 10–77 (KYICRNFSNF…WVEYFIAALR (68 aa)). A required for interaction with NLRX1 region spans residues 10–77 (KYICRNFSNF…WVEYFIAALR (68 aa)). A lipid anchor (S-palmitoyl cysteine) is attached at Cys79. The tract at residues 95–297 (YQPRTSDRPP…EAPANSLPSK (203 aa)) is disordered. Over residues 106–122 (PLEPPSLPAERPGPPTP) the composition is skewed to pro residues. The tract at residues 143-147 (PVQET) is interaction with TRAF2. Polar residues-rich tracts occupy residues 145–165 (QETQ…QTLS) and 179–216 (ESSS…SLTP). A phosphoserine mark is found at Ser152, Ser157, Ser165, Ser180, and Ser188. The tract at residues 153-158 (PGENSE) is interaction with TRAF6. Position 215 is a phosphothreonine (Thr215). Phosphoserine occurs at positions 222 and 233. Thr234 is modified (phosphothreonine). Residue Arg236 is modified to Asymmetric dimethylarginine. The span at 241–266 (PGPTGSVVSTGTSFSSSSPGLASAGA) shows a compositional bias: low complexity. Residues Ser253 and Ser258 each carry the phosphoserine modification. Residues Lys311 and Lys325 each participate in a glycyl lysine isopeptide (Lys-Gly) (interchain with G-Cter in ubiquitin) cross-link. 2 disordered regions span residues 314–358 (ANPA…RAGM) and 373–419 (SAST…SELS). Polar residues-rich tracts occupy residues 317-331 (ASVS…TSSK), 339-355 (NALT…NSTR), and 373-382 (SASTVPTDGS). The segment covering 388-403 (TPAAPTPAGATGGSSA) has biased composition (low complexity). The residue at position 408 (Ser408) is a Phosphoserine. Residues 439–442 (LAIS) carry the pLxIS motif motif. Ser442 carries the phosphoserine; by TBK1 modification. An interaction with TRAF6 region spans residues 455-460 (PEENEY). Residues Lys461 and Lys500 each participate in a glycyl lysine isopeptide (Lys-Gly) (interchain with G-Cter in ubiquitin) cross-link. Residue Lys461 forms a (Microbial infection) Glycyl lysine isopeptide (Lys-Gly) (interchain with G-Cter in UFM1) linkage. The disordered stretch occupies residues 476 to 507 (IQLLEGNPGPPADPDGGPRPQADRKFQEREVP). Residues 496 to 507 (QADRKFQEREVP) show a composition bias toward basic and acidic residues. Residues 514 to 534 (GALWLQVAVTGVLVVTLLVVL) traverse the membrane as a helical segment. The Mitochondrial intermembrane segment spans residues 535–540 (YRRRLH).

As to quaternary structure, self-associates and polymerizes (via CARD domains) to form 400 nM long three-stranded helical filaments on mitochondria, filament nucleation requires interaction with RIGI whose CARD domains act as a template for filament assembly. Interacts with RIGI, IFIH1/MDA5, TRAF2, TRAF6 and C1QBP. May interact with FADD, RIPK1, CHUK and IKBKB. Interacts (when phosphorylated) with IRF3; following activation and phosphorylation on the pLxIS motif by TBK1, recruits IRF3. Interacts with NLRX1. Interaction with NLRX1 requires the CARD domain. Interacts with PSMA7. Interacts with TRAFD1. Interacts (via C-terminus) with PCBP2 in a complex containing MAVS/IPS1, PCBP2 and ITCH. Interacts with CYLD. Interacts with SRC. Interacts with DHX58/LGP2 and IKBKE. Interacts with STING1. Interacts with IFIT3 (via N-terminus). Interacts with TBK1 only in the presence of IFIT3. Interacts with TTLL12; the interaction prevents MAVS binding to TBK1 and IKBKE. Interacts with MUL1. Interacts with ANKRD17. Interacts with NDFIP1. Interacts with SMURF1; the interaction is mediated by NDFIP1 and leads to MAVS ubiquitination and degradation. Interacts with UBXN1; this interaction inhibits MAVS-mediated antiviral pathway. Interacts (via C-terminus) with GPATCH3; the interaction is markedly increased upon viral infection. Directly interacts (via CARD domain) with ATG5 and ATG12, either as ATG5 and ATG12 monomers or as ATG12-ATG5 conjugates. Interacts with DHX33 (via the helicase C-terminal domain). Interacts with DDX3X (via C-terminus); this interaction occurs rapidly, but transiently after Sendai virus infection. The interaction with DDX3X potentiates MAVS-mediated IFNB induction. Conversely inhibition of this interaction, for instance by HCV core protein, prevents MAVS-mediated IFNB induction. Transiently interacts with TRAF3 early during Sendai virus infection. Interacts with CLPB; the interaction is enhanced by Sendai virus infection. Interacts with TRAF3IP3. Interacts with TOMM70; the interaction is enhanced by Sendai virus infection. Interacts with ZNFX1. Interacts with N4BP3; this interaction promotes the polyubiquitination of MAVS. Interacts with TAX1BP1; this interaction induces MAVS polyubiquitination. Interacts with NLRP3; promoting NLRP3 recruitment to mitochondria and activation of the NLRP3 inflammasome. Interacts with ECSIT; this interaction bridges RIGI to the MAVS complex at the mitochondrion. Interacts with UBL7; this interaction promotes MAVS 'Lys-27'-linked ubiquitination leading to type I interferon production. Interacts (via transmembrane domain) with SMIM30/MAVI1 (via transmembrane domain); the interaction disrupts MAVS interaction with RIGI and inhibits MAVS aggregation, resulting in the repression of type I interferon signaling and innate immune responses. (Microbial infection) Interacts with hepatitis C virus (HCV) NS3/4A protease; this interaction leads to MAVS cleavage, thereby preventing the establishment of an antiviral state. In terms of assembly, (Microbial infection) Interacts with hepatitis GB virus B NS3/4A protease; this interaction leads to MAVS cleavage. As to quaternary structure, (Microbial infection) Interacts with human respiratory syncytial virus/HRSV protein NS1; this interaction disrupts MAVS binding to RIGI. (Microbial infection) Interacts with Andes virus Nnon-structural protein NS-S; this interaction may reduce MAVS ubiquitination and leads to inhibition of MAVS-induced type-I IFN signaling pathway. In terms of assembly, (Microbial infection) Interacts with Seneca Valley virus protease 3C; this interaction allows the cleavage of MAVS and subsequent suppression of host innate immunity. As to quaternary structure, (Microbial infection) Interacts with SARS-CoV virus protein ORF9b; this interaction mediates MAVS proteasomal degradation. (Microbial infection) Interacts with SARS-CoV-2 virus protein M; this interaction impairs MAVS self-association and its recruitment of downstream components. In terms of assembly, (Microbial infection) Interacts with foot-and-mouth disease virus protein VP1; this interaction competes with TRAF3 interaction to MAVS leading to suppression of host innate immunity. As to quaternary structure, (Microbial infection) Interacts with Epstein-Barr virus protein BILF1; this interaction mediates MAVS routing from mitochondria to lysosomes. Following activation, phosphorylated by TBK1 at Ser-442 in the pLxIS motif. The phosphorylated pLxIS motif constitutes an IRF3-binding motif, leading to recruitment of the transcription factor IRF3 to induce type-I interferons and other cytokines. In terms of processing, ubiquitinated. Undergoes 'Lys-48'-linked polyubiquitination catalyzed by ITCH; ITCH-dependent polyubiquitination is mediated by the interaction with PCBP2 and leads to MAVS/IPS1 proteasomal degradation. Ubiquitinated by RNF125, leading to its degradation by the proteasome. Undergoes 'Lys-48'-linked ubiquitination catalyzed by SMURF1. Undergoes 'Lys-48'-linked ubiquitination catalyzed by MARCHF5 at Lys-7 and Lys-500, leading to proteasomal degradation. Ubiquitinated via 'Lys-63'-linked ubiquitination at Lys-10, Lys-311 and Lys-461 by UBE2N and TRIM31, promoting MAVS polymerization and formation of three-stranded helical filaments on mitochondria. Undergoes 'Lys-63'-linked ubiquitination leading to enhanced interaction between MAVS and TRAF2. Undergoes 'Lys-27'-linked ubiquitination by TRIM21 leading to enhanced interaction between MAVS and TBK1. Deubiquitinated by USP10 leading to attenuation of RIGI-mediated MAVS aggregation and production of type I interferon. Undergoes 'Lys-48'-linked polyubiquitination catalyzed by RNF115 leading to its degradation. Post-translationally, palmitoylated by ZHDDC4. Palmitoylation promotes MAVS stabilization and activation by inhibiting 'Lys-48'- but facilitating 'Lys-63'-linked ubiquitination. Proteolytically cleaved by apoptotic caspases during apoptosis, leading to its inactivation. Cleavage by CASP3 during virus-induced apoptosis inactivates it, preventing cytokine overproduction. In terms of processing, (Microbial infection) Cleaved and degraded by hepatitis A virus (HAV) protein 3ABC allowing the virus to disrupt the activation of host IRF3 through the MDA5 pathway. Post-translationally, (Microbial infection) Cleaved by the protease 2A of coxsackievirus B3, poliovirus and enterovirus 71 allowing the virus to disrupt the host type I interferon production. (Microbial infection) Cleaved by Seneca Valley virus protease 3C allowing the virus to suppress interferon type-I production. In terms of processing, (Microbial infection) Cleaved by HCV protease NS3/4A, thereby preventing the establishment of an antiviral state. Post-translationally, (Microbial infection) UFMylated by ULF1 in association with Epstein-Barr virus BILF1; leading to MAVS routing to the lysosome. As to expression, present in T-cells, monocytes, epithelial cells and hepatocytes (at protein level). Ubiquitously expressed, with highest levels in heart, skeletal muscle, liver, placenta and peripheral blood leukocytes.

It localises to the mitochondrion outer membrane. The protein resides in the mitochondrion. The protein localises to the peroxisome. Functionally, adapter required for innate immune defense against viruses. Acts downstream of DHX33, RIGI and IFIH1/MDA5, which detect intracellular dsRNA produced during viral replication, to coordinate pathways leading to the activation of NF-kappa-B, IRF3 and IRF7, and to the subsequent induction of antiviral cytokines such as IFNB and RANTES (CCL5). Peroxisomal and mitochondrial MAVS act sequentially to create an antiviral cellular state. Upon viral infection, peroxisomal MAVS induces the rapid interferon-independent expression of defense factors that provide short-term protection, whereas mitochondrial MAVS activates an interferon-dependent signaling pathway with delayed kinetics, which amplifies and stabilizes the antiviral response. May activate the same pathways following detection of extracellular dsRNA by TLR3. May protect cells from apoptosis. Involved in NLRP3 inflammasome activation by mediating NLRP3 recruitment to mitochondria. This is Mitochondrial antiviral-signaling protein from Homo sapiens (Human).